The sequence spans 393 residues: Serpin-Z4 (393 aa).

The segment at 342 to 366 is RCL; sequence GTEAAAVSVASMTKDMLLMGDFVAD.

It belongs to the serpin family.

Probable serine protease inhibitor. In Arabidopsis thaliana (Mouse-ear cress), this protein is Serpin-Z4.